We begin with the raw amino-acid sequence, 343 residues long: NADH dehydrogenase [ubiquinone] 1 alpha subcomplex subunit 10, mitochondrial (343 aa).

The transit peptide at 1 to 23 directs the protein to the mitochondrion; the sequence is MALRLLRLVPPRVGGIHTSVQFK. At Lys-110 the chain carries N6-acetyllysine; alternate. Residue Lys-110 is modified to N6-succinyllysine; alternate. Residue Ser-238 is modified to Phosphoserine; by PINK1.

This sequence belongs to the complex I NDUFA10 subunit family. Complex I is composed of 45 different subunits. This a component of the hydrophobic protein fraction. It depends on FAD as a cofactor. In terms of processing, phosphorylation at Ser-238 by PINK1 is required for the binding and/or reduction of the complex I substrate ubiquinone.

It is found in the mitochondrion matrix. In terms of biological role, accessory subunit of the mitochondrial membrane respiratory chain NADH dehydrogenase (Complex I), that is believed not to be involved in catalysis. Complex I functions in the transfer of electrons from NADH to the respiratory chain. The immediate electron acceptor for the enzyme is believed to be ubiquinone. The sequence is that of NADH dehydrogenase [ubiquinone] 1 alpha subcomplex subunit 10, mitochondrial (NDUFA10) from Bos taurus (Bovine).